A 411-amino-acid chain; its full sequence is 2-oxoglutarate-dependent dioxygenase AOP3 (411 aa).

In terms of domain architecture, Fe2OG dioxygenase spans 259–356; it reads GNASVGAKEA…RYAAALFSNP (98 aa). His279, Asp281, and His336 together coordinate Fe cation. Residue Arg347 coordinates 2-oxoglutarate.

The protein belongs to the iron/ascorbate-dependent oxidoreductase family. The cofactor is Fe(2+). In terms of tissue distribution, not expressed.

Functionally, 2-oxoglutarate-dependent dioxygenase involved in glucosinolates biosynthesis. Catalyzes the conversion of methylsulfinylalkyl glucosinolates to hydroxyalkyl glucosinolates. This chain is 2-oxoglutarate-dependent dioxygenase AOP3 (AOP3), found in Arabidopsis thaliana (Mouse-ear cress).